The primary structure comprises 171 residues: Crossover junction endodeoxyribonuclease RuvC (171 aa).

Residues aspartate 7, glutamate 66, and aspartate 138 contribute to the active site. Residues aspartate 7, glutamate 66, and aspartate 138 each contribute to the Mg(2+) site.

This sequence belongs to the RuvC family. As to quaternary structure, homodimer which binds Holliday junction (HJ) DNA. The HJ becomes 2-fold symmetrical on binding to RuvC with unstacked arms; it has a different conformation from HJ DNA in complex with RuvA. In the full resolvosome a probable DNA-RuvA(4)-RuvB(12)-RuvC(2) complex forms which resolves the HJ. The cofactor is Mg(2+).

It localises to the cytoplasm. It carries out the reaction Endonucleolytic cleavage at a junction such as a reciprocal single-stranded crossover between two homologous DNA duplexes (Holliday junction).. Functionally, the RuvA-RuvB-RuvC complex processes Holliday junction (HJ) DNA during genetic recombination and DNA repair. Endonuclease that resolves HJ intermediates. Cleaves cruciform DNA by making single-stranded nicks across the HJ at symmetrical positions within the homologous arms, yielding a 5'-phosphate and a 3'-hydroxyl group; requires a central core of homology in the junction. The consensus cleavage sequence is 5'-(A/T)TT(C/G)-3'. Cleavage occurs on the 3'-side of the TT dinucleotide at the point of strand exchange. HJ branch migration catalyzed by RuvA-RuvB allows RuvC to scan DNA until it finds its consensus sequence, where it cleaves and resolves the cruciform DNA. This Francisella tularensis subsp. mediasiatica (strain FSC147) protein is Crossover junction endodeoxyribonuclease RuvC.